The following is a 207-amino-acid chain: Ribosomal RNA small subunit methyltransferase G (207 aa).

S-adenosyl-L-methionine contacts are provided by residues Gly73, Leu78, Val124–Glu125, and Arg139.

It belongs to the methyltransferase superfamily. RNA methyltransferase RsmG family.

It localises to the cytoplasm. The enzyme catalyses guanosine(527) in 16S rRNA + S-adenosyl-L-methionine = N(7)-methylguanosine(527) in 16S rRNA + S-adenosyl-L-homocysteine. In terms of biological role, specifically methylates the N7 position of guanine in position 527 of 16S rRNA. This chain is Ribosomal RNA small subunit methyltransferase G, found in Klebsiella pneumoniae (strain 342).